Here is a 476-residue protein sequence, read N- to C-terminus: UDP-N-acetylmuramate--L-alanine ligase (476 aa).

ATP is bound at residue 125–131 (GTHGKTT).

Belongs to the MurCDEF family.

It localises to the cytoplasm. The catalysed reaction is UDP-N-acetyl-alpha-D-muramate + L-alanine + ATP = UDP-N-acetyl-alpha-D-muramoyl-L-alanine + ADP + phosphate + H(+). It participates in cell wall biogenesis; peptidoglycan biosynthesis. Cell wall formation. This chain is UDP-N-acetylmuramate--L-alanine ligase, found in Histophilus somni (strain 129Pt) (Haemophilus somnus).